A 1492-amino-acid polypeptide reads, in one-letter code: Neogenin (1492 aa).

The first 36 residues, 1-36 (MAAEREAGRLLCTSSSRRCCPPPPLLLLLPLLLLLG), serve as a signal peptide directing secretion. Residues 37 to 1136 (RPASGAAATK…PTSPLDSNML (1100 aa)) lie on the Extracellular side of the membrane. Ig-like C2-type domains lie at 63 to 158 (PFYF…AKLT), 163 to 249 (PRFT…AELK), 254 to 347 (PEEI…AELT), and 352 to 437 (PGFL…AQLI). N-linked (GlcNAc...) asparagine glycosylation occurs at N84. 3 disulfides stabilise this stretch: C85-C140, C184-C232, and C281-C331. Residue N221 is glycosylated (N-linked (GlcNAc...) asparagine). N337 is a glycosylation site (N-linked (GlcNAc...) asparagine). C373 and C421 are disulfide-bonded. Fibronectin type-III domains follow at residues 472 to 566 (APRD…TQPE), 572 to 662 (PAPN…TLSD), 667 to 762 (APQN…TFES), 772 to 862 (VPSS…RPHT), 887 to 986 (PPVG…LVPT), and 988 to 1085 (PPKD…TPKA). N-linked (GlcNAc...) asparagine glycosylation is found at N501 and N520. N-linked (GlcNAc...) asparagine glycosylation is found at N670 and N746. The N-linked (GlcNAc...) asparagine glycan is linked to N940. A disordered region spans residues 1072–1128 (GPMSEAVQFRTPKADSSDKMPNDQALGSAGKGSRLPDLGSDYKPPMSGSNSPHGSPT). Residues 1083-1092 (PKADSSDKMP) show a composition bias toward basic and acidic residues. Residues 1118 to 1128 (SGSNSPHGSPT) show a composition bias toward polar residues. The helical transmembrane segment at 1137-1157 (LVIIVSVGVITIVVVVVIAVF) threads the bilayer. Over 1158–1492 (CTRRTTSHQK…MKDLNAITTA (335 aa)) the chain is Cytoplasmic. 3 disordered regions span residues 1205–1237 (PIDK…SMDS), 1266–1300 (PKMM…HSSS), and 1321–1396 (SMSL…FAVP). A phosphoserine mark is found at S1209 and S1225. Positions 1222–1237 (PRNSQDITPVDNSMDS) are enriched in polar residues. At T1229 the chain carries Phosphothreonine. Composition is skewed to polar residues over residues 1321–1353 (SMSL…TCCT) and 1361–1380 (ATSS…QSLP). A Phosphoserine modification is found at S1432. T1435 carries the post-translational modification Phosphothreonine. Phosphoserine occurs at positions 1463, 1465, and 1466.

It belongs to the immunoglobulin superfamily. DCC family. As to quaternary structure, interacts with BMP2, BMP4, BMP6, and BMP7. Interacts with RGMA and RGMB. Interacts with MYO10. As to expression, widely expressed.

The protein localises to the cell membrane. Functionally, multi-functional cell surface receptor regulating cell adhesion in many diverse developmental processes, including neural tube and mammary gland formation, myogenesis and angiogenesis. Receptor for members of the BMP, netrin, and repulsive guidance molecule (RGM) families. Netrin-Neogenin interactions result in a chemoattractive axon guidance response and cell-cell adhesion, the interaction between NEO1/Neogenin and RGMa and RGMb induces a chemorepulsive response. This Mus musculus (Mouse) protein is Neogenin.